The following is a 353-amino-acid chain: Lysophosphatidic acid receptor 3 (353 aa).

The Extracellular portion of the chain corresponds to 1-31; that stretch reads MNECHYDKHMDFFYNRSNTDTVDDWTGTKLV. N15 carries N-linked (GlcNAc...) asparagine glycosylation. Residues 32–52 form a helical membrane-spanning segment; sequence IVLCVGTFFCLFIFFSNSLVI. Topologically, residues 53–67 are cytoplasmic; the sequence is AAVIKNRKFHFPFYY. The helical transmembrane segment at 68-88 threads the bilayer; sequence LLANLAAADFFAGIAYVFLMF. The Extracellular segment spans residues 89–101; that stretch reads NTGPVSKTLTVNR. A helical membrane pass occupies residues 102–124; sequence WFLRQGLLDSSLTASLTNLLVIA. Topologically, residues 125-146 are cytoplasmic; that stretch reads VERHMSIMRMRVHSNLTKKRVT. The chain crosses the membrane as a helical span at residues 147–167; it reads LLILLVWAIAIFMGAVPTLGW. Over 168–186 the chain is Extracellular; the sequence is NCLCNISACSSLAPIYSRS. N172 carries an N-linked (GlcNAc...) asparagine glycan. The chain crosses the membrane as a helical span at residues 187-207; that stretch reads YLVFWTVSNLMAFLIMVVVYL. At 208 to 240 the chain is on the cytoplasmic side; that stretch reads RIYVYVKRKTNVLSPHTSGSISRRRTPMKLMKT. Residues 241–261 form a helical membrane-spanning segment; that stretch reads VMTVLGAFVVCWTPGLVVLLL. At 262-276 the chain is on the extracellular side; that stretch reads DGLNCRQCGVQHVKR. The chain crosses the membrane as a helical span at residues 277–297; it reads WFLLLALLNSVVNPIIYSYKD. The Cytoplasmic segment spans residues 298–353; that stretch reads EDMYGTMKKMICCFSQENPERRPSRIPSTVLSRSDTGSQYIEDSISQGAVCNKSTS. C309 is lipidated: S-palmitoyl cysteine.

This sequence belongs to the G-protein coupled receptor 1 family. Most abundantly expressed in prostate, testes, pancreas, and heart, with moderate levels in lung and ovary. No detectable expression in brain, placenta, liver, skeletal muscle, kidney, spleen, thymus, small intestine, colon, or peripheral blood leukocytes.

The protein resides in the cell membrane. In terms of biological role, receptor for lysophosphatidic acid (LPA), a mediator of diverse cellular activities. May play a role in the development of ovarian cancer. Seems to be coupled to the G(i)/G(o) and G(q) families of heteromeric G proteins. This Homo sapiens (Human) protein is Lysophosphatidic acid receptor 3 (LPAR3).